Consider the following 235-residue polypeptide: Aspartate/glutamate leucyltransferase (235 aa).

It belongs to the R-transferase family. Bpt subfamily.

It localises to the cytoplasm. The catalysed reaction is N-terminal L-glutamyl-[protein] + L-leucyl-tRNA(Leu) = N-terminal L-leucyl-L-glutamyl-[protein] + tRNA(Leu) + H(+). The enzyme catalyses N-terminal L-aspartyl-[protein] + L-leucyl-tRNA(Leu) = N-terminal L-leucyl-L-aspartyl-[protein] + tRNA(Leu) + H(+). In terms of biological role, functions in the N-end rule pathway of protein degradation where it conjugates Leu from its aminoacyl-tRNA to the N-termini of proteins containing an N-terminal aspartate or glutamate. This is Aspartate/glutamate leucyltransferase from Shewanella putrefaciens (strain CN-32 / ATCC BAA-453).